A 321-amino-acid polypeptide reads, in one-letter code: Tetraacyldisaccharide 4'-kinase (321 aa).

54–61 (SVGGTGKT) is a binding site for ATP.

It belongs to the LpxK family.

It catalyses the reaction a lipid A disaccharide + ATP = a lipid IVA + ADP + H(+). Its pathway is glycolipid biosynthesis; lipid IV(A) biosynthesis; lipid IV(A) from (3R)-3-hydroxytetradecanoyl-[acyl-carrier-protein] and UDP-N-acetyl-alpha-D-glucosamine: step 6/6. Its function is as follows. Transfers the gamma-phosphate of ATP to the 4'-position of a tetraacyldisaccharide 1-phosphate intermediate (termed DS-1-P) to form tetraacyldisaccharide 1,4'-bis-phosphate (lipid IVA). The polypeptide is Tetraacyldisaccharide 4'-kinase (Rickettsia rickettsii).